Reading from the N-terminus, the 375-residue chain is Outer membrane porin C (375 aa).

Residues 1–21 (MKVKVLSLLVPALLVAGAANA) form the signal peptide. Topologically, residues 22 to 33 (AEVYNKDGNKLD) are periplasmic. Residues 34-42 (LYGKVDGLH) form a beta stranded membrane-spanning segment. Over 43–53 (YFSDDKSVDGD) the chain is Extracellular. Residues 54–63 (QTYMRLGFKG) traverse the membrane as a beta stranded segment. Residues 64–73 (ETQVTDQLTG) are Periplasmic-facing. A beta stranded membrane pass occupies residues 74–84 (YGQWEYQIQGN). Residues 85 to 91 (APESENN) lie on the Extracellular side of the membrane. Residues 92-101 (SWTRVAFAGL) traverse the membrane as a beta stranded segment. Over 102 to 106 (KFQDI) the chain is Periplasmic. Residues 107–115 (GSFDYGRNY) form a beta stranded membrane-spanning segment. Topologically, residues 116 to 141 (GVVYDVTSWTDVLPEFGGDTYGSDNF) are extracellular. The beta stranded transmembrane segment at 142–154 (MQQRGNGFATYRN) threads the bilayer. Topologically, residues 155 to 163 (TDFFGLVDG) are periplasmic. The chain crosses the membrane as a beta stranded span at residues 164-171 (LNFAVQYQ). Residues 172-204 (GQNGSVSGENDPDFTGHGITNNGRKALRQNGDG) are Extracellular-facing. The beta stranded transmembrane segment at 205 to 211 (VGGSITY) threads the bilayer. Topologically, residues 212-215 (DYEG) are periplasmic. The beta stranded transmembrane segment at 216–223 (FGVGAAVS) threads the bilayer. Topologically, residues 224-245 (SSKRTDAQNTAAYIGNGDRAET) are extracellular. Residues 246-252 (YTGGLKY) traverse the membrane as a beta stranded segment. Over 253–256 (DANN) the chain is Periplasmic. A beta stranded membrane pass occupies residues 257–264 (IYLAAQYT). The Extracellular segment spans residues 265–273 (QTYNATRVG). The beta stranded transmembrane segment at 274–290 (SLGWANKAQNFEAVAQY) threads the bilayer. Over 291–295 (QFDFG) the chain is Periplasmic. Residues 296–303 (LRPSVAYL) form a beta stranded membrane-spanning segment. At 304–326 (QSKGKNLGTIGTRNYDDEDILKY) the chain is on the extracellular side. Residues 327–334 (VDVGATYY) form a beta stranded membrane-spanning segment. Residues 335–338 (FNKN) are Periplasmic-facing. The beta stranded transmembrane segment at 339-346 (MSTYVDYK) threads the bilayer. The Extracellular portion of the chain corresponds to 347–366 (INLLDDNQFTRDAGINTDNI). A beta stranded membrane pass occupies residues 367 to 374 (VALGLVYQ). Position 375 (phenylalanine 375) is a topological domain, periplasmic.

The protein belongs to the Gram-negative porin family. Homotrimer. Forms mixed heterotrimers with OmpF; other mixed heterotrimers are also probable.

It is found in the cell outer membrane. Forms pores that allow passive diffusion of small molecules across the outer membrane. Its function is as follows. (Microbial infection) Supports colicin E5 entry in the absence of its major receptor OmpF. In terms of biological role, (Microbial infection) A mixed OmpC-OmpF heterotrimer is the outer membrane receptor for toxin CdiA-EC536. The protein is Outer membrane porin C (ompC) of Escherichia coli O6:K15:H31 (strain 536 / UPEC).